The following is a 200-amino-acid chain: METKKTGTTTVGIKAKDGIVLAADTQASLGHMVETLNIRKIIPITDRIAITTAGSVGDVQALARMLEAEARYYQFTWGKPMSTKAMANLLSNILNGNKWFPYLVQIILGGYVEEPTLANLDPLGGLIFDDYTATGSGSPFAIAVLEDGYKKDMSIEEAKELAVRAVRTAGKRDVYTGSRKIQIVAITKEGITEEFVEFND.

Residues 1-7 (METKKTG) constitute a propeptide, removed in mature form; by autocatalysis. Thr8 acts as the Nucleophile in catalysis.

Belongs to the peptidase T1B family. In terms of assembly, the 20S proteasome core is composed of 14 alpha and 14 beta subunits that assemble into four stacked heptameric rings, resulting in a barrel-shaped structure. The two inner rings, each composed of seven catalytic beta subunits, are sandwiched by two outer rings, each composed of seven alpha subunits. The catalytic chamber with the active sites is on the inside of the barrel. Has a gated structure, the ends of the cylinder being occluded by the N-termini of the alpha-subunits. Is capped at one or both ends by the proteasome regulatory ATPase, PAN.

It is found in the cytoplasm. It carries out the reaction Cleavage of peptide bonds with very broad specificity.. With respect to regulation, the formation of the proteasomal ATPase PAN-20S proteasome complex, via the docking of the C-termini of PAN into the intersubunit pockets in the alpha-rings, triggers opening of the gate for substrate entry. Interconversion between the open-gate and close-gate conformations leads to a dynamic regulation of the 20S proteasome proteolysis activity. Its function is as follows. Component of the proteasome core, a large protease complex with broad specificity involved in protein degradation. The chain is Proteasome subunit beta 2 from Thermococcus onnurineus (strain NA1).